The following is a 79-amino-acid chain: MTAAEIKDKVYDIIVSKMGVNRDQIKMESKFSDDLGADSLDTVELIMELESEFGVQIPDEDAEKIGTVQQAIDYIVNKK.

The Carrier domain maps to Ala4–Lys79. At Ser39 the chain carries O-(pantetheine 4'-phosphoryl)serine.

The protein belongs to the acyl carrier protein (ACP) family. 4'-phosphopantetheine is transferred from CoA to a specific serine of apo-ACP by AcpS. This modification is essential for activity because fatty acids are bound in thioester linkage to the sulfhydryl of the prosthetic group.

It is found in the cytoplasm. Its pathway is lipid metabolism; fatty acid biosynthesis. In terms of biological role, carrier of the growing fatty acid chain in fatty acid biosynthesis. The chain is Acyl carrier protein from Pelodictyon phaeoclathratiforme (strain DSM 5477 / BU-1).